Reading from the N-terminus, the 132-residue chain is Small ribosomal subunit protein eS24 (132 aa).

Residues L92 to K101 are compositionally biased toward basic and acidic residues. The disordered stretch occupies residues L92 to K132. Over residues R102–K132 the composition is skewed to basic residues.

It belongs to the eukaryotic ribosomal protein eS24 family.

This is Small ribosomal subunit protein eS24 (RpS24) from Spodoptera frugiperda (Fall armyworm).